The primary structure comprises 457 residues: Cysteine--tRNA ligase (457 aa).

Cys-28 contributes to the Zn(2+) binding site. The 'HIGH' region signature appears at 30-40 (MTVYDYCHLGH). Zn(2+) contacts are provided by Cys-209, His-234, and Glu-238. The 'KMSKS' region signature appears at 266–270 (KMSKS). Residue Lys-269 coordinates ATP.

The protein belongs to the class-I aminoacyl-tRNA synthetase family. As to quaternary structure, monomer. The cofactor is Zn(2+).

The protein resides in the cytoplasm. The catalysed reaction is tRNA(Cys) + L-cysteine + ATP = L-cysteinyl-tRNA(Cys) + AMP + diphosphate. This Laribacter hongkongensis (strain HLHK9) protein is Cysteine--tRNA ligase.